We begin with the raw amino-acid sequence, 74 residues long: Antimicrobial peptide HsAp1 (74 aa).

Positions 1 to 21 are cleaved as a signal peptide; the sequence is MSRRVILTLVLVTILVKTMAG. Positions 22–33 are excised as a propeptide; that stretch reads MESKKVETTDEI. At P65 the chain carries Proline amide. The propeptide occupies 69 to 74; that stretch reads AISEQT.

This sequence belongs to the non-disulfide-bridged peptide (NDBP) superfamily. Medium-length antimicrobial peptide (group 3) family. In terms of tissue distribution, expressed by the venom gland.

It localises to the secreted. Its subcellular location is the target cell membrane. Its function is as follows. Possesses antimicrobial activity against both Gram-negative (MIC=23.8-51.2 uM) and Gram-positive (MIC=11.8-46.5 uM) bacteria, as well as against the fungus C.tropicalis (MIC=48.6 uM). Also possesses a relatively high hemolytic activity. May act by disrupting the integrity of the bacterial cell membrane. This is Antimicrobial peptide HsAp1 from Heterometrus spinifer (Asia giant forest scorpion).